A 312-amino-acid chain; its full sequence is Porphobilinogen deaminase (312 aa).

Cysteine 241 carries the post-translational modification S-(dipyrrolylmethanemethyl)cysteine.

It belongs to the HMBS family. As to quaternary structure, monomer. Dipyrromethane is required as a cofactor.

It carries out the reaction 4 porphobilinogen + H2O = hydroxymethylbilane + 4 NH4(+). The protein operates within porphyrin-containing compound metabolism; protoporphyrin-IX biosynthesis; coproporphyrinogen-III from 5-aminolevulinate: step 2/4. Functionally, tetrapolymerization of the monopyrrole PBG into the hydroxymethylbilane pre-uroporphyrinogen in several discrete steps. The protein is Porphobilinogen deaminase of Trichlorobacter lovleyi (strain ATCC BAA-1151 / DSM 17278 / SZ) (Geobacter lovleyi).